A 362-amino-acid chain; its full sequence is Very-long-chain (3R)-3-hydroxyacyl-CoA dehydratase 3 (362 aa).

Methionine 1 bears the N-acetylmethionine mark. Residues 1–149 are Cytoplasmic-facing; it reads METQVLTPHV…ETLTNLKKGY (149 aa). Residues 5-94 enclose the CS domain; it reads VLTPHVYWAQ…KGSHWWERLT (90 aa). Position 7 is a phosphothreonine (threonine 7). A coiled-coil region spans residues 111-138; it reads LDESDAEMELRAKEEERLNKLRLEREGS. Serine 114 carries the post-translational modification Phosphoserine. Residues 150–170 traverse the membrane as a helical segment; the sequence is LFMYNLVQLLGFSWIFVNLTV. At 171 to 189 the chain is on the lumenal side; that stretch reads RFFILGKESFYDTFHNVAD. A helical membrane pass occupies residues 190 to 210; the sequence is MMYFCQMLALVETLNAAIGVT. At 211-212 the chain is on the cytoplasmic side; the sequence is ST. The helical transmembrane segment at 213–233 threads the bilayer; that stretch reads PVLPALIQFLGRNFILFLVFG. Topologically, residues 234-242 are lumenal; the sequence is TMEEMQNKA. Residues 243–263 form a helical membrane-spanning segment; it reads VVFFVFYSWSAIEIFRYPFYM. Topologically, residues 264–280 are cytoplasmic; that stretch reads LSCIDMDWKVLTWLRYT. A helical transmembrane segment spans residues 281–301; sequence MWIPLYPLGCLSEAVAVIQSI. Residues tyrosine 286 and glutamate 293 contribute to the active site. Residues 302–322 are Lumenal-facing; it reads PVFNESGRFSFTLPYPVKMKV. Residues 323–343 form a helical membrane-spanning segment; sequence RFSFFLQVYLVMLFLGLYINF. Over 344–362 the chain is Cytoplasmic; the sequence is RHLYKQRRRRYGQKKKKLH.

This sequence belongs to the very long-chain fatty acids dehydratase HACD family. May interact with enzymes of the ELO family (including ELOVL1); with those enzymes that mediate condensation, the first of the four steps of the reaction cycle responsible for fatty acids elongation, may be part of a larger fatty acids elongase complex. Interacts with RAC1. Associates with internalized insulin receptor/INSR complexes on Golgi/endosomal membranes; HACD3/PTPLAD1 together with ATIC and PRKAA2/AMPK2 is proposed to be part of a signaling network regulating INSR autophosphorylation and endocytosis.

Its subcellular location is the endoplasmic reticulum membrane. It carries out the reaction a very-long-chain (3R)-3-hydroxyacyl-CoA = a very-long-chain (2E)-enoyl-CoA + H2O. It catalyses the reaction (3R)-hydroxyhexadecanoyl-CoA = (2E)-hexadecenoyl-CoA + H2O. The protein operates within lipid metabolism; fatty acid biosynthesis. Its function is as follows. Catalyzes the third of the four reactions of the long-chain fatty acids elongation cycle. This endoplasmic reticulum-bound enzymatic process, allows the addition of two carbons to the chain of long- and very long-chain fatty acids/VLCFAs per cycle. This enzyme catalyzes the dehydration of the 3-hydroxyacyl-CoA intermediate into trans-2,3-enoyl-CoA, within each cycle of fatty acid elongation. Thereby, it participates in the production of VLCFAs of different chain lengths that are involved in multiple biological processes as precursors of membrane lipids and lipid mediators. Involved in Rac1-signaling pathways leading to the modulation of gene expression. Promotes insulin receptor/INSR autophosphorylation and is involved in INSR internalization. The sequence is that of Very-long-chain (3R)-3-hydroxyacyl-CoA dehydratase 3 from Mus musculus (Mouse).